Here is a 258-residue protein sequence, read N- to C-terminus: MKKMPMRKRFGQHFLHDSFVLQKIVSAIHPQKTDTLVEIGPGRGALTDYLLTECDNLALVEIDRDLVAFLQKKYNQQKNITIYQNDALQFDFSSVKTDKPLRVVGNLPYNISTPLLFHLFSQIHCIEDMHFMLQKEVVRRITAEVGSHDYGRLSVMAQYFCDNTYLFTVSPQAFTPPPRVESAIIRLIPRHNFTPVAKNLDQLSHVVKEAFSYRRKTVGNALKKLINPSQWPLLEINPQLRPQELTVEDFVKISNILN.

Residues histidine 13, leucine 15, glycine 40, glutamate 61, aspartate 86, and asparagine 106 each contribute to the S-adenosyl-L-methionine site.

The protein belongs to the class I-like SAM-binding methyltransferase superfamily. rRNA adenine N(6)-methyltransferase family. RsmA subfamily.

It localises to the cytoplasm. The enzyme catalyses adenosine(1518)/adenosine(1519) in 16S rRNA + 4 S-adenosyl-L-methionine = N(6)-dimethyladenosine(1518)/N(6)-dimethyladenosine(1519) in 16S rRNA + 4 S-adenosyl-L-homocysteine + 4 H(+). Specifically dimethylates two adjacent adenosines (A1518 and A1519) in the loop of a conserved hairpin near the 3'-end of 16S rRNA in the 30S particle. May play a critical role in biogenesis of 30S subunits. This is Ribosomal RNA small subunit methyltransferase A from Coxiella burnetii (strain CbuG_Q212) (Coxiella burnetii (strain Q212)).